Here is a 261-residue protein sequence, read N- to C-terminus: Putative glyoxylase CFP32 (261 aa).

VOC domains follow at residues Thr11 to Ala129 and Thr143 to Pro257. 2 glyoxalase regions span residues Asn13–Ala123 and Leu149–Phe252.

The chain is Putative glyoxylase CFP32 from Mycobacterium bovis (strain ATCC BAA-935 / AF2122/97).